The following is a 150-amino-acid chain: MLGAALRRCAVAATTWAGPRGLLHSSRTPGPAAAIQSVRCYSHGSHETDEEFDARWVTYFNKPDIDAWELRKGINTLVTYDLVPEPKIIDAALRACRRLNDFASTVRILEAVKDKAGPHKEIYPYVIQELRPTLNELGISTPEELGLDKV.

A mitochondrion-targeting transit peptide spans 1–41; it reads MLGAALRRCAVAATTWAGPRGLLHSSRTPGPAAAIQSVRCY. An SIFI-degron motif is present at residues 2–17; that stretch reads LGAALRRCAVAATTWA. An N6-acetyllysine mark is found at lysine 87 and lysine 113. Threonine 141 is modified (phosphothreonine).

It belongs to the cytochrome c oxidase subunit 5A family. Component of the cytochrome c oxidase (complex IV, CIV), a multisubunit enzyme composed of 14 subunits. The complex is composed of a catalytic core of 3 subunits MT-CO1, MT-CO2 and MT-CO3, encoded in the mitochondrial DNA, and 11 supernumerary subunits COX4I, COX5A, COX5B, COX6A, COX6B, COX6C, COX7A, COX7B, COX7C, COX8 and NDUFA4, which are encoded in the nuclear genome. The complex exists as a monomer or a dimer and forms supercomplexes (SCs) in the inner mitochondrial membrane with NADH-ubiquinone oxidoreductase (complex I, CI) and ubiquinol-cytochrome c oxidoreductase (cytochrome b-c1 complex, complex III, CIII), resulting in different assemblies (supercomplex SCI(1)III(2)IV(1) and megacomplex MCI(2)III(2)IV(2)). Interacts with AFG1L. Interacts with RAB5IF. Post-translationally, in response to mitochondrial stress, the precursor protein is ubiquitinated by the SIFI complex in the cytoplasm before mitochondrial import, leading to its degradation. Within the SIFI complex, UBR4 initiates ubiquitin chain that are further elongated or branched by KCMF1.

It is found in the mitochondrion inner membrane. Its pathway is energy metabolism; oxidative phosphorylation. In terms of biological role, component of the cytochrome c oxidase, the last enzyme in the mitochondrial electron transport chain which drives oxidative phosphorylation. The respiratory chain contains 3 multisubunit complexes succinate dehydrogenase (complex II, CII), ubiquinol-cytochrome c oxidoreductase (cytochrome b-c1 complex, complex III, CIII) and cytochrome c oxidase (complex IV, CIV), that cooperate to transfer electrons derived from NADH and succinate to molecular oxygen, creating an electrochemical gradient over the inner membrane that drives transmembrane transport and the ATP synthase. Cytochrome c oxidase is the component of the respiratory chain that catalyzes the reduction of oxygen to water. Electrons originating from reduced cytochrome c in the intermembrane space (IMS) are transferred via the dinuclear copper A center (CU(A)) of subunit 2 and heme A of subunit 1 to the active site in subunit 1, a binuclear center (BNC) formed by heme A3 and copper B (CU(B)). The BNC reduces molecular oxygen to 2 water molecules using 4 electrons from cytochrome c in the IMS and 4 protons from the mitochondrial matrix. The sequence is that of Cytochrome c oxidase subunit 5A, mitochondrial (COX5A) from Colobus guereza (Mantled guereza).